Consider the following 568-residue polypeptide: Proline--tRNA ligase (568 aa).

Belongs to the class-II aminoacyl-tRNA synthetase family. ProS type 1 subfamily. As to quaternary structure, homodimer.

The protein resides in the cytoplasm. The enzyme catalyses tRNA(Pro) + L-proline + ATP = L-prolyl-tRNA(Pro) + AMP + diphosphate. Catalyzes the attachment of proline to tRNA(Pro) in a two-step reaction: proline is first activated by ATP to form Pro-AMP and then transferred to the acceptor end of tRNA(Pro). As ProRS can inadvertently accommodate and process non-cognate amino acids such as alanine and cysteine, to avoid such errors it has two additional distinct editing activities against alanine. One activity is designated as 'pretransfer' editing and involves the tRNA(Pro)-independent hydrolysis of activated Ala-AMP. The other activity is designated 'posttransfer' editing and involves deacylation of mischarged Ala-tRNA(Pro). The misacylated Cys-tRNA(Pro) is not edited by ProRS. This is Proline--tRNA ligase from Campylobacter jejuni subsp. jejuni serotype O:6 (strain 81116 / NCTC 11828).